Here is a 93-residue protein sequence, read N- to C-terminus: Probable Fe(2+)-trafficking protein (93 aa).

This sequence belongs to the Fe(2+)-trafficking protein family.

Its function is as follows. Could be a mediator in iron transactions between iron acquisition and iron-requiring processes, such as synthesis and/or repair of Fe-S clusters in biosynthetic enzymes. This chain is Probable Fe(2+)-trafficking protein, found in Acidithiobacillus ferrooxidans (strain ATCC 23270 / DSM 14882 / CIP 104768 / NCIMB 8455) (Ferrobacillus ferrooxidans (strain ATCC 23270)).